A 339-amino-acid chain; its full sequence is Cathepsin B (339 aa).

Residues 1–17 (MWWLWASLCCLLALGDA) form the signal peptide. Residues 18 to 79 (RSRPSFHPLS…QRVMFTEDLK (62 aa)) constitute a propeptide, activation peptide. Intrachain disulfides connect Cys-93/Cys-122, Cys-105/Cys-150, Cys-141/Cys-207, Cys-142/Cys-146, Cys-179/Cys-211, and Cys-187/Cys-198. Residue Cys-108 is part of the active site. N-linked (GlcNAc...) asparagine glycosylation is present at Asn-192. The residue at position 220 (Lys-220) is an N6-acetyllysine. Active-site residues include His-278 and Asn-298. A propeptide spanning residues 334–339 (QYWEKI) is cleaved from the precursor.

The protein belongs to the peptidase C1 family. In terms of assembly, dimer of a heavy chain and a light chain cross-linked by a disulfide bond. Interacts with SRPX2. Directly interacts with SHKBP1.

It localises to the lysosome. The protein resides in the melanosome. Its subcellular location is the secreted. It is found in the extracellular space. The protein localises to the apical cell membrane. The enzyme catalyses Hydrolysis of proteins with broad specificity for peptide bonds. Preferentially cleaves -Arg-Arg-|-Xaa bonds in small molecule substrates (thus differing from cathepsin L). In addition to being an endopeptidase, shows peptidyl-dipeptidase activity, liberating C-terminal dipeptides.. Functionally, thiol protease which is believed to participate in intracellular degradation and turnover of proteins. Cleaves matrix extracellular phosphoglycoprotein MEPE. Involved in the solubilization of cross-linked TG/thyroglobulin in the thyroid follicle lumen. Has also been implicated in tumor invasion and metastasis. The chain is Cathepsin B (CTSB) from Macaca fascicularis (Crab-eating macaque).